A 22-amino-acid chain; its full sequence is Cysteine proteinase (22 aa).

Residues 1-22 (GADDSDWRKKGAVNVIXKDQGQ) are disordered.

It belongs to the peptidase C1 family.

In Trichomonas vaginalis, this protein is Cysteine proteinase.